Consider the following 421-residue polypeptide: Polygalacturonase (421 aa).

The first 20 residues, 1 to 20, serve as a signal peptide directing secretion; that stretch reads MKFSTAIIVSFLFIADFCAA. Asparagine 156 and asparagine 180 each carry an N-linked (GlcNAc...) asparagine glycan. PbH1 repeat units follow at residues 178 to 204 and 205 to 226; these read CKNI…HMGK and STDV…SIGD. Residue aspartate 219 is the Proton donor of the active site. Histidine 242 is an active-site residue. PbH1 repeat units follow at residues 258–279 and 289–310; these read VEGI…RIKT and VSDI…IIDQ. The N-linked (GlcNAc...) asparagine glycan is linked to asparagine 265. The tract at residues 394–421 is disordered; sequence PGAPAASTTATPAASKTATPAAGKSPAK.

The protein belongs to the glycosyl hydrolase 28 family. As to expression, pollen specific.

The protein localises to the secreted. The protein resides in the cell wall. It catalyses the reaction (1,4-alpha-D-galacturonosyl)n+m + H2O = (1,4-alpha-D-galacturonosyl)n + (1,4-alpha-D-galacturonosyl)m.. Functionally, may function in the depolymerization of the pectin in its walls during pollen tube elongation, or in that of the pistil during pollination. In Medicago sativa (Alfalfa), this protein is Polygalacturonase.